The following is an 822-amino-acid chain: Tubulin polyglutamylase TTLL6 (822 aa).

The tract at residues Met1–Leu24 is disordered. The segment covering Glu8 to Leu24 has biased composition (acidic residues). The 344-residue stretch at Lys57 to Glu400 folds into the TTL domain. ATP contacts are provided by residues Lys174, Gln180–Gly181, Gln202–Ile205, and Lys215–Asp217. Gln180 contributes to the a protein binding site. Arg241 is an L-glutamate binding site. An ATP-binding site is contributed by Thr263–Asn264. L-glutamate is bound by residues Tyr265, Ser266, and Lys283. Asp346, Glu359, and Asn361 together coordinate Mg(2+). His362 provides a ligand contact to a protein. The tract at residues Lys371–Gly450 is c-MTBD region. Position 377 (Lys377) interacts with L-glutamate. Disordered stretches follow at residues Pro736–Val772 and Thr791–Ala822. The segment covering Ser802 to Gln814 has biased composition (polar residues).

The protein belongs to the tubulin--tyrosine ligase family. Found in a complex with CEP41. Requires Mg(2+) as cofactor. Highly expressed in testis. Expressed in brain, heart, kidney, liver, lung, muscle and trachea. In the brain, specifically expressed in ependymal cilia.

It is found in the cytoplasm. It localises to the cytoskeleton. The protein resides in the cilium axoneme. Its subcellular location is the cilium basal body. It catalyses the reaction L-glutamyl-[protein] + L-glutamate + ATP = gamma-L-glutamyl-L-glutamyl-[protein] + ADP + phosphate + H(+). The enzyme catalyses (L-glutamyl)(n)-gamma-L-glutamyl-L-glutamyl-[protein] + L-glutamate + ATP = (L-glutamyl)(n+1)-gamma-L-glutamyl-L-glutamyl-[protein] + ADP + phosphate + H(+). Functionally, polyglutamylase which modifies both tubulin and non-tubulin proteins, generating alpha-linked polyglutamate side chains on the gamma-carboxyl group of specific glutamate residues of target proteins. Preferentially mediates ATP-dependent long polyglutamate chain elongation over the initiation step of the polyglutamylation reaction. Preferentially modifies the alpha-tubulin tail over a beta-tail. Promotes tubulin polyglutamylation which stimulates spastin/SPAST-mediated microtubule severing, thereby regulating microtubule functions. Mediates microtubule polyglutamylation in primary cilia axoneme which is important for ciliary structural formation and motility. Mediates microtubule polyglutamylation in motile cilia, necessary for the regulation of ciliary coordinated beating. Polyglutamylates non-tubulin protein nucleotidyltransferase CGAS, leading to CGAS DNA-binding inhibition, thereby preventing antiviral defense response. This is Tubulin polyglutamylase TTLL6 from Mus musculus (Mouse).